Reading from the N-terminus, the 537-residue chain is P2Y purinoceptor 4 (537 aa).

At 1–49 (MTEDIMATSYPTFLTTPYLPMKLLMNLTNDTEDICVFDEGFKFLLLPVS) the chain is on the extracellular side. 2 N-linked (GlcNAc...) asparagine glycosylation sites follow: N26 and N29. A helical transmembrane segment spans residues 50 to 70 (YSAVFMVGLPLNIAAMWIFIA). At 71–79 (KMRPWNPTT) the chain is on the cytoplasmic side. The chain crosses the membrane as a helical span at residues 80–100 (VYMFNLALSDTLYVLSLPTLV). At 101 to 118 (YYYADKNNWPFGEVLCKL) the chain is on the extracellular side. C116 and C193 are disulfide-bonded. A helical membrane pass occupies residues 119–139 (VRFLFYANLYSSILFLTCISV). At 140–161 (HRYRGVCHPITSLRRMNAKHAY) the chain is on the cytoplasmic side. Residues 162–182 (VICALVWLSVTLCLVPNLIFV) traverse the membrane as a helical segment. Residues 183–210 (TVSPKVKNTICHDTTRPEDFARYVEYST) are Extracellular-facing. Residues 211-231 (AIMCLLFGIPCLIIAGCYGLM) form a helical membrane-spanning segment. Residues 232–254 (TRELMKPIVSGNQQTLPSYKKRS) are Cytoplasmic-facing. A helical membrane pass occupies residues 255-275 (IKTIIFVMIAFAICFMPFHIT). At 276-292 (RTLYYYARLLGIKCYAL) the chain is on the extracellular side. A helical membrane pass occupies residues 293 to 316 (NVINVTYKVTRPLASANSCIDPIL). Over 317 to 537 (YFLANDRYRR…EKELQNFPKA (221 aa)) the chain is Cytoplasmic. The disordered stretch occupies residues 401–505 (NRRSTIKRNS…GEGTSTWNLL (105 aa)). 2 stretches are compositionally biased toward basic and acidic residues: residues 409 to 423 (NSTD…RHGE) and 431 to 447 (VVEK…RKTT). Residues 448-465 (EQSSKTNAEQDELQTQID) show a composition bias toward polar residues.

This sequence belongs to the G-protein coupled receptor 1 family.

It localises to the cell membrane. Its function is as follows. Receptor for extracellular ATP, UTP, CTP, GTP and ITP. The activity of this receptor is mediated by G proteins which activate a phosphatidylinositol-calcium second messenger system. May play a key role in the early development of neural tissue. The polypeptide is P2Y purinoceptor 4 (p2ry4) (Xenopus laevis (African clawed frog)).